Consider the following 432-residue polypeptide: FMRFamide peptide receptor frpr-18 (432 aa).

Residues M1–A8 are Extracellular-facing. A helical membrane pass occupies residues C9 to F29. Over S30 to L42 the chain is Cytoplasmic. A helical membrane pass occupies residues L43–I63. The Extracellular segment spans residues P64–K84. The helical transmembrane segment at L85–T105 threads the bilayer. Topologically, residues L106 to R128 are cytoplasmic. Residues N129 to Y149 traverse the membrane as a helical segment. Residues R150–G176 are Extracellular-facing. A helical membrane pass occupies residues Y177–A197. The Cytoplasmic portion of the chain corresponds to N198 to T225. The chain crosses the membrane as a helical span at residues T226–L246. Over N247–D271 the chain is Extracellular. A helical membrane pass occupies residues L272 to S292. The Cytoplasmic portion of the chain corresponds to E293–C432. 2 disordered regions span residues I328–S349 and K388–E411.

Belongs to the G-protein coupled receptor 1 family. In terms of tissue distribution, expressed in a subset of neurons in the head, midbody, and tail, including AIY, ASI, BAG, URA, CAN, I6, PVQ, DVA, RIM, and VC, and in the anal sphincter and intestinal muscles. Expression from the ASI neurons is involved in promoting arousal.

The protein localises to the cell membrane. Its function is as follows. G-protein coupled receptor for flp-2 neuropeptides. May act through the G(q) alpha type of G proteins. Involved in mediating arousal from the sleep-like state called lethargus, which occurs during molting between larval and adult stages, in part by regulating touch sensitivity, and working in concert with neuropeptide pdf-1. The chain is FMRFamide peptide receptor frpr-18 from Caenorhabditis elegans.